Here is a 136-residue protein sequence, read N- to C-terminus: Psoriasis susceptibility 1 candidate gene 2 protein homolog (136 aa).

A signal peptide spans 1-22 (MILNWKLLGILVLCLHTRGISG). Residues 20-136 (ISGSEDHPSH…DLDPPREEYR (117 aa)) are disordered. Positions 23–33 (SEDHPSHPPAE) are enriched in basic and acidic residues. Pro residues-rich tracts occupy residues 44–74 (PQGP…PPWR) and 83–116 (PPEP…PPAP). Over residues 117–136 (EVDHRPQEEPDLDPPREEYR) the composition is skewed to basic and acidic residues.

The protein resides in the secreted. The polypeptide is Psoriasis susceptibility 1 candidate gene 2 protein homolog (PSORS1C2) (Pan troglodytes (Chimpanzee)).